Consider the following 195-residue polypeptide: Xanthine phosphoribosyltransferase (195 aa).

Leu-20 and Asn-27 together coordinate xanthine. 128-132 (ANGQA) contacts 5-phospho-alpha-D-ribose 1-diphosphate. Lys-156 serves as a coordination point for xanthine.

It belongs to the purine/pyrimidine phosphoribosyltransferase family. Xpt subfamily. In terms of assembly, homodimer.

The protein localises to the cytoplasm. It carries out the reaction XMP + diphosphate = xanthine + 5-phospho-alpha-D-ribose 1-diphosphate. The protein operates within purine metabolism; XMP biosynthesis via salvage pathway; XMP from xanthine: step 1/1. Functionally, converts the preformed base xanthine, a product of nucleic acid breakdown, to xanthosine 5'-monophosphate (XMP), so it can be reused for RNA or DNA synthesis. The polypeptide is Xanthine phosphoribosyltransferase (Lactiplantibacillus plantarum (strain ATCC BAA-793 / NCIMB 8826 / WCFS1) (Lactobacillus plantarum)).